The primary structure comprises 420 residues: Caspase-12 (420 aa).

Residues 1–92 (MAAKRTHERD…QLSLQFPSDD (92 aa)) form the CARD domain. 2 positions are modified to phosphoserine: Ser85 and Ser90. The interval 93-115 (EEDELQKMFTPSSASESRGKVED) is disordered. Catalysis depends on residues His251 and Cys299.

The protein belongs to the peptidase C14A family. In terms of assembly, heterotetramer that consists of two anti-parallel arranged heterodimers, each one formed by two subunits (Potential). May interact with TRAF2.

Functionally, involved in the activation cascade of caspases responsible for apoptosis execution. This chain is Caspase-12 (Casp12), found in Rattus norvegicus (Rat).